Consider the following 487-residue polypeptide: Aspyridones efflux protein apdF (487 aa).

Positions 1 to 21 are enriched in basic and acidic residues; sequence MSSVRESSKDESIVHPPKAPE. The segment at 1 to 25 is disordered; sequence MSSVRESSKDESIVHPPKAPESEPF. Residues 35–55 form a helical membrane-spanning segment; the sequence is VALGAGGVLFCTFGYVNAFGV. N67 is a glycosylation site (N-linked (GlcNAc...) asparagine). 8 helical membrane passes run 75–95, 99–119, 126–146, 159–179, 191–211, 234–254, 262–282, and 293–313; these read WIGS…GPLF, GAKV…MTSL, FFLA…APAL, AAMG…PIAL, WAVR…VLGI, VATL…FFYL, GMST…SFFG, and IGPY…TFCW. N319 carries N-linked (GlcNAc...) asparagine glycosylation. Transmembrane regions (helical) follow at residues 322 to 342, 354 to 374, and 385 to 405; these read IIVF…ITPA, IGTY…IGPP, and GFLQ…VLAF.

This sequence belongs to the major facilitator superfamily. Monocarboxylate porter (TC 2.A.1.13) family.

It is found in the cell membrane. In terms of biological role, efflux pump that may be involved in the secretion of aspyridones. The protein is Aspyridones efflux protein apdF of Emericella nidulans (strain FGSC A4 / ATCC 38163 / CBS 112.46 / NRRL 194 / M139) (Aspergillus nidulans).